The primary structure comprises 513 residues: MQLNPSEISELIKSRISELGVDSQVRNEGTVISVTDGICRVHGLSGVMQGEMLEFPNNTIGLALNLERDSVGAVVLGEYTHIKEGDPVKCTGRILEVPVGPELLGRVVSVLGQPIDGKGPINTKLTDFIEKVAPGVIARQSVSQPVQTGLKAIDAMVPIGRGQRELIIGDRQTGKTAVAVDAIINQKGKGVYCVYVAIGQKASTIANVVRKLTENGAIDYTIVVAASASESAAMQYLSAYAGCTMGEYFRDRGEDALIVYDDLTKQAVAYRQISLLLRRPPGREAYPGDVFYLHSRLLERAARVNAEYVEKFTNGAVKGKTGSLTALPIIETQAGDVSAFVPTNVISITDGQIFLETDLFNAGVRPAINAGISVSRVGGTAQTKVIKKLSGGIRTDLAQYRELAAFAQFASDLDEATRKQLERGRRVTELCKQAQYKPLQVWEMAASLYAVNNGFFDDLEVKNVLAFEKGLQDHLKSKYADLVARIEATKDLSKDDEAALRAAVEDYKRSASF.

169–176 (GDRQTGKT) provides a ligand contact to ATP.

Belongs to the ATPase alpha/beta chains family. F-type ATPases have 2 components, CF(1) - the catalytic core - and CF(0) - the membrane proton channel. CF(1) has five subunits: alpha(3), beta(3), gamma(1), delta(1), epsilon(1). CF(0) has three main subunits: a(1), b(2) and c(9-12). The alpha and beta chains form an alternating ring which encloses part of the gamma chain. CF(1) is attached to CF(0) by a central stalk formed by the gamma and epsilon chains, while a peripheral stalk is formed by the delta and b chains.

The protein resides in the cell inner membrane. The catalysed reaction is ATP + H2O + 4 H(+)(in) = ADP + phosphate + 5 H(+)(out). In terms of biological role, produces ATP from ADP in the presence of a proton gradient across the membrane. The alpha chain is a regulatory subunit. The protein is ATP synthase subunit alpha of Polynucleobacter necessarius subsp. necessarius (strain STIR1).